The chain runs to 118 residues: Large ribosomal subunit protein uL18 (118 aa).

Belongs to the universal ribosomal protein uL18 family. As to quaternary structure, part of the 50S ribosomal subunit; part of the 5S rRNA/L5/L18/L25 subcomplex. Contacts the 5S and 23S rRNAs.

Its function is as follows. This is one of the proteins that bind and probably mediate the attachment of the 5S RNA into the large ribosomal subunit, where it forms part of the central protuberance. This Brachyspira hyodysenteriae (strain ATCC 49526 / WA1) protein is Large ribosomal subunit protein uL18.